We begin with the raw amino-acid sequence, 203 residues long: tRNA (guanine-N(7)-)-methyltransferase (203 aa).

The S-adenosyl-L-methionine site is built by glutamate 34, glutamate 59, aspartate 86, and aspartate 107. Residue aspartate 107 is part of the active site. Residues lysine 111, aspartate 143, and 181 to 184 contribute to the substrate site; that span reads TSYE.

The protein belongs to the class I-like SAM-binding methyltransferase superfamily. TrmB family.

It carries out the reaction guanosine(46) in tRNA + S-adenosyl-L-methionine = N(7)-methylguanosine(46) in tRNA + S-adenosyl-L-homocysteine. It participates in tRNA modification; N(7)-methylguanine-tRNA biosynthesis. In terms of biological role, catalyzes the formation of N(7)-methylguanine at position 46 (m7G46) in tRNA. This chain is tRNA (guanine-N(7)-)-methyltransferase, found in Mycoplasmopsis pulmonis (strain UAB CTIP) (Mycoplasma pulmonis).